The primary structure comprises 422 residues: Serine hydroxymethyltransferase 2 (422 aa).

(6S)-5,6,7,8-tetrahydrofolate contacts are provided by residues Leu-121 and 125–127 (GHL). Lys-230 carries the post-translational modification N6-(pyridoxal phosphate)lysine.

This sequence belongs to the SHMT family. As to quaternary structure, homodimer. Requires pyridoxal 5'-phosphate as cofactor.

The protein localises to the cytoplasm. It catalyses the reaction (6R)-5,10-methylene-5,6,7,8-tetrahydrofolate + glycine + H2O = (6S)-5,6,7,8-tetrahydrofolate + L-serine. It functions in the pathway one-carbon metabolism; tetrahydrofolate interconversion. Its pathway is amino-acid biosynthesis; glycine biosynthesis; glycine from L-serine: step 1/1. Functionally, catalyzes the reversible interconversion of serine and glycine with tetrahydrofolate (THF) serving as the one-carbon carrier. This reaction serves as the major source of one-carbon groups required for the biosynthesis of purines, thymidylate, methionine, and other important biomolecules. Also exhibits THF-independent aldolase activity toward beta-hydroxyamino acids, producing glycine and aldehydes, via a retro-aldol mechanism. This Agrobacterium fabrum (strain C58 / ATCC 33970) (Agrobacterium tumefaciens (strain C58)) protein is Serine hydroxymethyltransferase 2.